The sequence spans 418 residues: Serine protease inhibitor A3K (418 aa).

A signal peptide spans 1 to 21 (MAFIVAMGMILMAGICPAVLC). N-linked (GlcNAc...) asparagine glycans are attached at residues N39, N105, N185, and N270. The interval 369–394 (GTEAAAATGVIGGIRKAILPAVHFNR) is RCL.

This sequence belongs to the serpin family. In terms of tissue distribution, expressed in liver and secreted in plasma.

Its subcellular location is the secreted. Contrapsin inhibits trypsin-like proteases. The chain is Serine protease inhibitor A3K (Serpina3k) from Mus musculus (Mouse).